The chain runs to 833 residues: Urease (833 aa).

Residues 395–833 enclose the Urease domain; sequence GALDVHVHYI…LPLTKRYFVY (439 aa). Ni(2+)-binding residues include histidine 400 and histidine 402. Positions 402 and 433 each coordinate urea. Lysine 483 contributes to the Ni(2+) binding site. N6-carboxylysine is present on lysine 483. Histidine 485 and histidine 512 together coordinate urea. Ni(2+) contacts are provided by histidine 512 and histidine 538. Catalysis depends on histidine 586, which acts as the Proton donor. Residue aspartate 626 participates in Ni(2+) binding. Urea is bound at residue alanine 629.

The protein in the C-terminal section; belongs to the metallo-dependent hydrolases superfamily. Urease alpha subunit family. Homohexamer. The cofactor is Ni(2+). In terms of processing, carboxylation allows a single lysine to coordinate two nickel ions.

It carries out the reaction urea + 2 H2O + H(+) = hydrogencarbonate + 2 NH4(+). The protein operates within nitrogen metabolism; urea degradation; CO(2) and NH(3) from urea (urease route): step 1/1. The urease accessory proteins URE4, URE6 and URE7 are required for urease activity, URE7 supplying nickel for the functional urease. In terms of biological role, plays a nutritional role via nitrogen acquisition in the environment. Contributes to the central nervous system invasion by enhancing yeast sequestration within microcapillary beds (such as within the brain) during hematogenous spread, thereby facilitating blood-to-brain invasion by C.neoformans. Affects fitness within the mammalian phagosome, promoting non-lytic exocytosis while delaying intracellular replication and thus reducing phagolysosomal membrane damage, events that could facilitate cryptococcal dissemination when transported inside macrophages. Urease activity is also associated with the regulation of key intracellular metabolic pathways, including melanin biosynthesis, polyamine biosynthesis, as well as intracellular levels of proline and reactive oxygen species. The polypeptide is Urease (Cryptococcus neoformans var. neoformans serotype D (strain B-3501A) (Filobasidiella neoformans)).